Consider the following 497-residue polypeptide: Aspartyl/glutamyl-tRNA(Asn/Gln) amidotransferase subunit B (497 aa).

It belongs to the GatB/GatE family. GatB subfamily. As to quaternary structure, heterotrimer of A, B and C subunits.

The enzyme catalyses L-glutamyl-tRNA(Gln) + L-glutamine + ATP + H2O = L-glutaminyl-tRNA(Gln) + L-glutamate + ADP + phosphate + H(+). It carries out the reaction L-aspartyl-tRNA(Asn) + L-glutamine + ATP + H2O = L-asparaginyl-tRNA(Asn) + L-glutamate + ADP + phosphate + 2 H(+). Functionally, allows the formation of correctly charged Asn-tRNA(Asn) or Gln-tRNA(Gln) through the transamidation of misacylated Asp-tRNA(Asn) or Glu-tRNA(Gln) in organisms which lack either or both of asparaginyl-tRNA or glutaminyl-tRNA synthetases. The reaction takes place in the presence of glutamine and ATP through an activated phospho-Asp-tRNA(Asn) or phospho-Glu-tRNA(Gln). In Rhodopirellula baltica (strain DSM 10527 / NCIMB 13988 / SH1), this protein is Aspartyl/glutamyl-tRNA(Asn/Gln) amidotransferase subunit B.